Here is a 354-residue protein sequence, read N- to C-terminus: Holliday junction branch migration complex subunit RuvB (354 aa).

The interval M1–Y183 is large ATPase domain (RuvB-L). Residues R23, G64, K67, T68, S69, E130–F132, R173, Y183, and R220 each bind ATP. Mg(2+) is bound at residue T68. A small ATPAse domain (RuvB-S) region spans residues S184–D254. The tract at residues A257–P354 is head domain (RuvB-H). R312 and R317 together coordinate DNA. A disordered region spans residues T330–P354.

This sequence belongs to the RuvB family. As to quaternary structure, homohexamer. Forms an RuvA(8)-RuvB(12)-Holliday junction (HJ) complex. HJ DNA is sandwiched between 2 RuvA tetramers; dsDNA enters through RuvA and exits via RuvB. An RuvB hexamer assembles on each DNA strand where it exits the tetramer. Each RuvB hexamer is contacted by two RuvA subunits (via domain III) on 2 adjacent RuvB subunits; this complex drives branch migration. In the full resolvosome a probable DNA-RuvA(4)-RuvB(12)-RuvC(2) complex forms which resolves the HJ.

It is found in the cytoplasm. It carries out the reaction ATP + H2O = ADP + phosphate + H(+). In terms of biological role, the RuvA-RuvB-RuvC complex processes Holliday junction (HJ) DNA during genetic recombination and DNA repair, while the RuvA-RuvB complex plays an important role in the rescue of blocked DNA replication forks via replication fork reversal (RFR). RuvA specifically binds to HJ cruciform DNA, conferring on it an open structure. The RuvB hexamer acts as an ATP-dependent pump, pulling dsDNA into and through the RuvAB complex. RuvB forms 2 homohexamers on either side of HJ DNA bound by 1 or 2 RuvA tetramers; 4 subunits per hexamer contact DNA at a time. Coordinated motions by a converter formed by DNA-disengaged RuvB subunits stimulates ATP hydrolysis and nucleotide exchange. Immobilization of the converter enables RuvB to convert the ATP-contained energy into a lever motion, pulling 2 nucleotides of DNA out of the RuvA tetramer per ATP hydrolyzed, thus driving DNA branch migration. The RuvB motors rotate together with the DNA substrate, which together with the progressing nucleotide cycle form the mechanistic basis for DNA recombination by continuous HJ branch migration. Branch migration allows RuvC to scan DNA until it finds its consensus sequence, where it cleaves and resolves cruciform DNA. The polypeptide is Holliday junction branch migration complex subunit RuvB (Salinispora arenicola (strain CNS-205)).